The primary structure comprises 355 residues: LIM/homeobox protein lim-4 (355 aa).

LIM zinc-binding domains are found at residues 96-155 and 166-228; these read VICT…THVT and PKCA…LVEG. The segment at residues 239 to 298 is a DNA-binding region (homeobox); sequence TKRVRTTFAEDQLSVLQTYFNRDSNPDGADLEKIASMTGLSKRVTQVWFQNSRARQKKWH. The interval 291 to 336 is disordered; the sequence is RARQKKWHQKSEGDNGDSQRSSVGPSSPSQKSDSSSEMMYPTSVTT. The span at 306–326 shows a compositional bias: low complexity; sequence GDSQRSSVGPSSPSQKSDSSS.

As to quaternary structure, interacts with transcription factor sox-2. As to expression, expressed in the AWB sensory neurons and in one RME motor neuron (RMEV), two RMD motor neurons (RMDL and RMDR), the RID, RIV, SAA and SIA interneurons and the SMB sensory/inter/motor neurons.

It localises to the nucleus. Transcription factor that binds to the promoter of target genes. Regulates genes involved in serotonin synthesis and release in serotonergic ADF neurons. Involved in specification of neuron cell fate, olfactory receptor expression, locomotion, and foraging behavior. Required in AWB olfactory neurons to repress AWC cell fate and promote the AWB cell fate during early development. Cooperates with additional factors to direct the differentiation of the olfactory neurons, functioning with the transcription factor sox-2 to suppress AWC terminal differentiation and promote AWB neuron differentiation. Involved in regulating terminal specification and maintenance of the SMB sensory/inter/motor neurons. Plays a role in regulation of RID motor neuron differentiation, but is dispensable for motor axon outgrowth in the dorsal nerve cord. May regulate its own expression. The polypeptide is LIM/homeobox protein lim-4 (Caenorhabditis elegans).